The primary structure comprises 131 residues: Profilin (131 aa).

The protein belongs to the profilin family. As to quaternary structure, occurs in many kinds of cells as a complex with monomeric actin in a 1:1 ratio.

It is found in the cytoplasm. The protein localises to the cytoskeleton. Functionally, binds to actin and affects the structure of the cytoskeleton. At high concentrations, profilin prevents the polymerization of actin, whereas it enhances it at low concentrations. By binding to PIP2, it inhibits the formation of IP3 and DG. The protein is Profilin of Prunus avium (Cherry).